The following is a 239-amino-acid chain: Non-classical arabinogalactan protein 30 (239 aa).

A signal peptide spans 1–24; the sequence is MGIIGKSVSLTLFALLCFTSSVFT. Residue N106 is glycosylated (N-linked (GlcNAc...) asparagine).

Belongs to the non-classical AGP family. As to expression, specifically expressed in root tips.

The protein resides in the secreted. The protein localises to the cell wall. Its function is as follows. Proteoglycan required for the timing of seed germination. May function in the abscisic acid (ABA) response. The polypeptide is Non-classical arabinogalactan protein 30 (Arabidopsis thaliana (Mouse-ear cress)).